We begin with the raw amino-acid sequence, 219 residues long: Ribose-5-phosphate isomerase A (219 aa).

Residues 29–32 (TGST), 82–85 (DGAD), and 95–98 (KGGG) each bind substrate. The active-site Proton acceptor is glutamate 104. Position 122 (lysine 122) interacts with substrate.

This sequence belongs to the ribose 5-phosphate isomerase family. As to quaternary structure, homodimer.

The catalysed reaction is aldehydo-D-ribose 5-phosphate = D-ribulose 5-phosphate. The protein operates within carbohydrate degradation; pentose phosphate pathway; D-ribose 5-phosphate from D-ribulose 5-phosphate (non-oxidative stage): step 1/1. Functionally, catalyzes the reversible conversion of ribose-5-phosphate to ribulose 5-phosphate. This chain is Ribose-5-phosphate isomerase A, found in Chromobacterium violaceum (strain ATCC 12472 / DSM 30191 / JCM 1249 / CCUG 213 / NBRC 12614 / NCIMB 9131 / NCTC 9757 / MK).